The following is a 74-amino-acid chain: Anaphase-promoting complex subunit 13 (74 aa).

A disordered region spans residues L33–K56.

It belongs to the APC13 family. In terms of assembly, the mammalian APC/C is composed at least of 14 distinct subunits ANAPC1, ANAPC2, CDC27/APC3, ANAPC4, ANAPC5, CDC16/APC6, ANAPC7, CDC23/APC8, ANAPC10, ANAPC11, CDC26/APC12, ANAPC13, ANAPC15 and ANAPC16 that assemble into a complex of at least 19 chains with a combined molecular mass of around 1.2 MDa; APC/C interacts with FZR1 and FBXO5.

It localises to the nucleus. It participates in protein modification; protein ubiquitination. Component of the anaphase promoting complex/cyclosome (APC/C), a cell cycle-regulated E3 ubiquitin ligase that controls progression through mitosis and the G1 phase of the cell cycle. The APC/C complex acts by mediating ubiquitination and subsequent degradation of target proteins: it mainly mediates the formation of 'Lys-11'-linked polyubiquitin chains and, to a lower extent, the formation of 'Lys-48'- and 'Lys-63'-linked polyubiquitin chains. The APC/C complex catalyzes assembly of branched 'Lys-11'-/'Lys-48'-linked branched ubiquitin chains on target proteins. The chain is Anaphase-promoting complex subunit 13 (Anapc13) from Mus musculus (Mouse).